A 492-amino-acid polypeptide reads, in one-letter code: Cytochrome P450 2B12 (492 aa).

Serine 129 is subject to Phosphoserine. Cysteine 437 lines the heme pocket.

The protein belongs to the cytochrome P450 family. Requires heme as cofactor. Preputial gland, but not in liver.

The protein resides in the endoplasmic reticulum membrane. The protein localises to the microsome membrane. It catalyses the reaction an organic molecule + reduced [NADPH--hemoprotein reductase] + O2 = an alcohol + oxidized [NADPH--hemoprotein reductase] + H2O + H(+). Its function is as follows. Cytochromes P450 are a group of heme-thiolate monooxygenases. In liver microsomes, this enzyme is involved in an NADPH-dependent electron transport pathway. This isozyme seems responsible for metabolism of 2,2',4,4',5,5'-hexachlorobiphenyl. This is Cytochrome P450 2B12 (Cyp2b12) from Rattus norvegicus (Rat).